Consider the following 40-residue polypeptide: Photosystem II reaction center protein J (40 aa).

The chain crosses the membrane as a helical span at residues 8–28 (IPLWLIGTVTGILVIGLLGIF).

This sequence belongs to the PsbJ family. PSII is composed of 1 copy each of membrane proteins PsbA, PsbB, PsbC, PsbD, PsbE, PsbF, PsbH, PsbI, PsbJ, PsbK, PsbL, PsbM, PsbT, PsbX, PsbY, PsbZ, Psb30/Ycf12, at least 3 peripheral proteins of the oxygen-evolving complex and a large number of cofactors. It forms dimeric complexes.

It localises to the plastid. The protein localises to the chloroplast thylakoid membrane. In terms of biological role, one of the components of the core complex of photosystem II (PSII). PSII is a light-driven water:plastoquinone oxidoreductase that uses light energy to abstract electrons from H(2)O, generating O(2) and a proton gradient subsequently used for ATP formation. It consists of a core antenna complex that captures photons, and an electron transfer chain that converts photonic excitation into a charge separation. This chain is Photosystem II reaction center protein J, found in Angiopteris evecta (Mule's foot fern).